A 153-amino-acid chain; its full sequence is Small ribosomal subunit protein uS13 (153 aa).

Belongs to the universal ribosomal protein uS13 family. Part of the 30S ribosomal subunit. Forms a loose heterodimer with protein S19. Forms two bridges to the 50S subunit in the 70S ribosome.

Functionally, located at the top of the head of the 30S subunit, it contacts several helices of the 16S rRNA. In the 70S ribosome it contacts the 23S rRNA (bridge B1a) and protein L5 of the 50S subunit (bridge B1b), connecting the 2 subunits; these bridges are implicated in subunit movement. The protein is Small ribosomal subunit protein uS13 of Pyrobaculum islandicum (strain DSM 4184 / JCM 9189 / GEO3).